Consider the following 639-residue polypeptide: Chaperone protein DnaK (639 aa).

Phosphothreonine; by autocatalysis is present on T198. Residues 602–639 (QAKSQAQGGDNADAGKQANATADDVVDAEFEEVKDDKK) are disordered. A compositionally biased stretch (acidic residues) spans 625–639 (DVVDAEFEEVKDDKK).

This sequence belongs to the heat shock protein 70 family.

Acts as a chaperone. This is Chaperone protein DnaK from Shewanella baltica (strain OS155 / ATCC BAA-1091).